A 1479-amino-acid polypeptide reads, in one-letter code: MSQLWVLYETYCQLFSLTNEEKVIVIGNQLEHHVTVSSFSFRNGYIQIEKKSDGSTLAVLQGGRQIGELKPRCSITIDVDGQQMTIAWSGEEQRKYVYYVGQQSEVLVSNDPQADIETTNARFSLRKHRGQWVVIPDDDAPLFLNGVQLSDAVSLRNGDVLLCPYMQFVFIEEDLLAVTSSEEVVSSLTETMPPLSEMKKKYPMYRRTPRMIYELPSDKVSISFPSQEGDGDPRGLWLMVLPPVMMLLVIGAVALIQPRGVFIMISIAMFATTIVTSTAQYMREKKARQMRKEKRRRIYTNYLEQKREELQALSEKQRNVLYYHFPSFEQMKSFVMQVNSRIWERTAESADFLHVRIGTADVPATYEVSVSMGDLANREIDDLLEQAQHIAKVYQTVKHVPLPIDVSHGAIGMVGKRSIVNGEIEQLVGQIAFFHSYHDVRFVAIFSEDDYKHWEWMKWLPHFQLPNSFAKGLIYNEQTRDQLLSSIYEMLRERALDEEKDKKRFSPHFVFIVADRSLIAEHVILEYLEEKNEDIGISVIFASETKESLTENVHTLVQYINEREGEIVIQHRKAAHIPFQLDEHSTEGNESFARMLRSLNHQKGMSNSIPEKVTFLEMMQTRRANELQIVQNWLSCQTSRSLAVPIGLKGRNDVVELNLHEKAHGPHGLVAGTTGSGKSELLQTYILSLAVHFHPHEVAFLIIDYKGGGMAQPFKNMPHLLGTITNIHGSKNFSARALASINSELKKRQRLFDRYEVNHINDYMELYKQGKAEQPLPHLFLIADEFAELKSEEPDFIRELVSAARIGRSLGVHLILATQKPRGVIDEQIWSNARFRISLKMQDVNDSKEILRNGDAAAITVPGRAYLQVGNNEVYELFQSAWSGAPYVEEGVEAEDEIHIVTDLGLVPVSNVATDRKRSRQKPKTEIEMVVEQIIETQKQLNIEKLPSPWLPPLPPRLARPASVTAEANAFPIGLKDEPELQSQSDYFYQWLEDGNIGIFGSAGYGKSTTMMTLLLSFAGAYNPAQLHYYIFDFGNSALLPLRQLPHTADYFRLDDEKKIEKFIKFMKEEMEQRKQRFMEKEVSTIKLYNALSEEKLPIIIVALDNFDVVKEEMPDFETQLIQYARDGQSLGIFFIMTATRVSGIRPPLMNNLKTKIVHYFIDSSEKFSLIGRTPYDVDPIPGRALIKKDNAALTQIYLPADGEDDIEVLENVKREMERLKEVYQHIPKPKPIPMLPPRLSMSVFTNTYVQHRASGFIPVGLDEQTVRPVAINMRTDPHCLIVGQSRKGKTNVVKVILESLLVQEPESIGLLDGIDRGLAGYANRDDITYIEAKERLAQWLNEADAVLQQREREYIQAVNENRATTLAWPPVVFVVDSLLRLQQETDSIMQGRIANMMKQYSHLGFHVFVAGNANEFVKGFDALTAELKQIRQAILVTKKSEQSLFALPFTRNEQEIEPGFGYFVVGGKDQKIQIPKVE.

Residues 1-235 are Cytoplasmic-facing; sequence MSQLWVLYET…SQEGDGDPRG (235 aa). Residues 236-256 traverse the membrane as a helical segment; sequence LWLMVLPPVMMLLVIGAVALI. Topologically, residues 257-259 are extracellular; that stretch reads QPR. The chain crosses the membrane as a helical span at residues 260–280; the sequence is GVFIMISIAMFATTIVTSTAQ. At 281 to 1479 the chain is on the cytoplasmic side; sequence YMREKKARQM…DQKIQIPKVE (1199 aa). Residues 291-321 are a coiled coil; sequence RKEKRRRIYTNYLEQKREELQALSEKQRNVL. FtsK domains follow at residues 652–848 and 984–1168; these read NDVV…NDSK and QSDY…SEKF. ATP is bound at residue 672–679; that stretch reads GTTGSGKS. E785 is an active-site residue. ATP-binding positions include 1004–1009, N1036, D1105, I1197, D1206, 1287–1291, and I1475; these read GYGKST and RKGKT. The region spanning 1267-1444 is the FtsK 3 domain; it reads VRPVAINMRT…ILVTKKSEQS (178 aa).

Whole protein oligomerizes in native gels. Part of the ESX / type VII secretion system (T7SS), which is composed of cytosolic and membrane components. The ESX membrane complex is composed of EccB, EccC and EccD.

The protein localises to the cell membrane. With respect to regulation, esxB binding to the third FtsK domain causes multimerization; a subsequent unknown step relieves the allosteric inhibition of linker 2 on FtsK domain 1, activating the ATPase activity. In terms of biological role, part of the ESX specialized secretion system, which exports proteins from the cell including EsxA (ESAT-6) and EsxB (CFP-10). Might be the translocase subunit. Probably only the first FtsK domain can hydrolyze ATP. The sequence is that of ESX secretion system protein EccC from Geobacillus thermodenitrificans (strain NG80-2).